The sequence spans 912 residues: DNA ligase 4 (912 aa).

Glu-271, Thr-272, Lys-273, Leu-274, Arg-278, Glu-331, Lys-345, Phe-367, Glu-427, Lys-432, Lys-449, and Lys-451 together coordinate ATP. Lys-273 functions as the N6-AMP-lysine intermediate in the catalytic mechanism. Glu-331 is a binding site for Mg(2+). Glu-427 lines the Mg(2+) pocket. Positions 610 to 620 (LATKHLHVGDD) are required for catalytic activity. BRCT domains are found at residues 654 to 743 (KVSN…PRFM) and 846 to 912 (LRFH…QYLL).

The protein belongs to the ATP-dependent DNA ligase family. In terms of assembly, interacts with XRCC4; the LIG4-XRCC4 subcomplex has a 1:2 stoichiometry and XRCC4 is required for LIG4 stability. Component of the core long-range non-homologous end joining (NHEJ) complex (also named DNA-PK complex) composed of PRKDC, LIG4, XRCC4, XRCC6/Ku70, XRCC5/Ku86 and NHEJ1/XLF. Additional component of the NHEJ complex includes PAXX. Following autophosphorylation, PRKDC dissociates from DNA, leading to formation of the short-range NHEJ complex, composed of LIG4, XRCC4, XRCC6/Ku70, XRCC5/Ku86 and NHEJ1/XLF. Interacts with DCLRE1C; the interaction is direct. Interacts with APLF. Mg(2+) is required as a cofactor.

It localises to the nucleus. It carries out the reaction ATP + (deoxyribonucleotide)n-3'-hydroxyl + 5'-phospho-(deoxyribonucleotide)m = (deoxyribonucleotide)n+m + AMP + diphosphate.. Functionally, DNA ligase involved in DNA non-homologous end joining (NHEJ); required for double-strand break (DSB) repair and V(D)J recombination. Catalyzes the NHEJ ligation step of the broken DNA during DSB repair by resealing the DNA breaks after the gap filling is completed. Joins single-strand breaks in a double-stranded polydeoxynucleotide in an ATP-dependent reaction. LIG4 is mechanistically flexible: it can ligate nicks as well as compatible DNA overhangs alone, while in the presence of XRCC4, it can ligate ends with 2-nucleotides (nt) microhomology and 1-nt gaps. Forms a subcomplex with XRCC4; the LIG4-XRCC4 subcomplex is responsible for the NHEJ ligation step and XRCC4 enhances the joining activity of LIG4. Binding of the LIG4-XRCC4 complex to DNA ends is dependent on the assembly of the DNA-dependent protein kinase complex DNA-PK to these DNA ends. LIG4 regulates nuclear localization of XRCC4. This Cricetulus griseus (Chinese hamster) protein is DNA ligase 4.